The primary structure comprises 186 residues: ATP-dependent protease subunit HslV (186 aa).

T14 is an active-site residue. Na(+) is bound by residues A168, C171, and T174.

Belongs to the peptidase T1B family. HslV subfamily. As to quaternary structure, a double ring-shaped homohexamer of HslV is capped on each side by a ring-shaped HslU homohexamer. The assembly of the HslU/HslV complex is dependent on binding of ATP.

The protein resides in the cytoplasm. It catalyses the reaction ATP-dependent cleavage of peptide bonds with broad specificity.. With respect to regulation, allosterically activated by HslU binding. Functionally, protease subunit of a proteasome-like degradation complex believed to be a general protein degrading machinery. The sequence is that of ATP-dependent protease subunit HslV from Methylorubrum extorquens (strain CM4 / NCIMB 13688) (Methylobacterium extorquens).